Here is a 738-residue protein sequence, read N- to C-terminus: Catalase-peroxidase (738 aa).

Residues 1–24 (MSEEHPPIAEANSQPSNGCPVAGG) are disordered. The segment at residues 108–231 (WHAAGTYRVG…LAAVQMGLIY (124 aa)) is a cross-link (tryptophyl-tyrosyl-methioninium (Trp-Tyr) (with M-257)). H109 (proton acceptor) is an active-site residue. The segment at residues 231 to 257 (YVNPEGPNGNPDPLAAAIDIRETFGRM) is a cross-link (tryptophyl-tyrosyl-methioninium (Tyr-Met) (with W-108)). H272 serves as a coordination point for heme b.

It belongs to the peroxidase family. Peroxidase/catalase subfamily. Homodimer or homotetramer. Heme b is required as a cofactor. In terms of processing, formation of the three residue Trp-Tyr-Met cross-link is important for the catalase, but not the peroxidase activity of the enzyme.

The catalysed reaction is H2O2 + AH2 = A + 2 H2O. It catalyses the reaction 2 H2O2 = O2 + 2 H2O. Its function is as follows. Bifunctional enzyme with both catalase and broad-spectrum peroxidase activity. This is Catalase-peroxidase from Mycobacteroides abscessus (strain ATCC 19977 / DSM 44196 / CCUG 20993 / CIP 104536 / JCM 13569 / NCTC 13031 / TMC 1543 / L948) (Mycobacterium abscessus).